Reading from the N-terminus, the 145-residue chain is uncharacterized protein (145 aa).

Residues Met-1 to Phe-59 form a disordered region.

This is an uncharacterized protein from Caenorhabditis elegans.